The following is a 157-amino-acid chain: Probable cyclic pyranopterin monophosphate synthase (157 aa).

Residues 75 to 77 and 111 to 112 contribute to the substrate site; these read MCH and ME. D126 is an active-site residue.

This sequence belongs to the MoaC family. In terms of assembly, homohexamer; trimer of dimers.

It carries out the reaction (8S)-3',8-cyclo-7,8-dihydroguanosine 5'-triphosphate = cyclic pyranopterin phosphate + diphosphate. Its pathway is cofactor biosynthesis; molybdopterin biosynthesis. Catalyzes the conversion of (8S)-3',8-cyclo-7,8-dihydroguanosine 5'-triphosphate to cyclic pyranopterin monophosphate (cPMP). This Methanosarcina mazei (strain ATCC BAA-159 / DSM 3647 / Goe1 / Go1 / JCM 11833 / OCM 88) (Methanosarcina frisia) protein is Probable cyclic pyranopterin monophosphate synthase.